A 419-amino-acid polypeptide reads, in one-letter code: S-adenosylmethionine synthase (419 aa).

His15 is an ATP binding site. Asp17 is a binding site for Mg(2+). Glu43 contacts K(+). L-methionine-binding residues include Glu56 and Gln100. The interval Gln100 to Glu110 is flexible loop. Residues Asp171–Lys173, Lys248–Phe249, Asp257, Arg263–Lys264, Ala280, and Lys284 each bind ATP. Asp257 is an L-methionine binding site. Lys288 provides a ligand contact to L-methionine.

The protein belongs to the AdoMet synthase family. In terms of assembly, homotetramer; dimer of dimers. It depends on Mg(2+) as a cofactor. K(+) is required as a cofactor.

The protein localises to the cytoplasm. It catalyses the reaction L-methionine + ATP + H2O = S-adenosyl-L-methionine + phosphate + diphosphate. The protein operates within amino-acid biosynthesis; S-adenosyl-L-methionine biosynthesis; S-adenosyl-L-methionine from L-methionine: step 1/1. Functionally, catalyzes the formation of S-adenosylmethionine (AdoMet) from methionine and ATP. The overall synthetic reaction is composed of two sequential steps, AdoMet formation and the subsequent tripolyphosphate hydrolysis which occurs prior to release of AdoMet from the enzyme. In Synechococcus sp. (strain CC9311), this protein is S-adenosylmethionine synthase.